Reading from the N-terminus, the 165-residue chain is Lipoprotein signal peptidase (165 aa).

Helical transmembrane passes span 66 to 86 (WQFWLFLVATVLAVWAILSLT) and 91 to 111 (NEPVLYTAFGLIMGGALGNLV). Residues Asp-121 and Asp-139 contribute to the active site. Residues 132-152 (WPAFNVADIAICIGAFLAFVA) traverse the membrane as a helical segment.

This sequence belongs to the peptidase A8 family.

The protein resides in the cell inner membrane. The enzyme catalyses Release of signal peptides from bacterial membrane prolipoproteins. Hydrolyzes -Xaa-Yaa-Zaa-|-(S,diacylglyceryl)Cys-, in which Xaa is hydrophobic (preferably Leu), and Yaa (Ala or Ser) and Zaa (Gly or Ala) have small, neutral side chains.. It functions in the pathway protein modification; lipoprotein biosynthesis (signal peptide cleavage). Functionally, this protein specifically catalyzes the removal of signal peptides from prolipoproteins. The protein is Lipoprotein signal peptidase of Nitratidesulfovibrio vulgaris (strain DP4) (Desulfovibrio vulgaris).